The sequence spans 87 residues: Putative membrane protein insertion efficiency factor (87 aa).

This sequence belongs to the UPF0161 family.

The protein localises to the cell membrane. Functionally, could be involved in insertion of integral membrane proteins into the membrane. The sequence is that of Putative membrane protein insertion efficiency factor from Ligilactobacillus salivarius (strain UCC118) (Lactobacillus salivarius).